A 152-amino-acid polypeptide reads, in one-letter code: MAHAERTFIAIKPDGVQRGLVGEIIKRFEQKGFRLVAMKFLQASEELLKQHYIDLKDRPFFPGLVKYMNSGPVVAMVWEGLNVVKTGRVMLGETNPADSKPGTIRGDFCIQVGRNIIHGSDSVKSAEKEINLWFKPEELIEYKPCAFDWIYE.

Residues 1–66 (MAHAERTFIA…DRPFFPGLVK (66 aa)) are interaction with AKAP13. Residues K12, F60, R88, T94, R105, and N115 each contribute to the ATP site. H118 functions as the Pros-phosphohistidine intermediate in the catalytic mechanism.

It belongs to the NDK family. In terms of assembly, hexamer of two different chains: An and B (A6, A5B, A4B2, A3B3, A2B4, AB5, B6). Interacts with CAPN8. Interacts with AKAP13. Interacts with ITGB1BP1 (via C-terminal domain region). Interacts with BCL2L10. The cofactor is Mg(2+).

It is found in the cytoplasm. The protein localises to the cell projection. It localises to the lamellipodium. The protein resides in the ruffle. Its subcellular location is the nucleus. The enzyme catalyses a 2'-deoxyribonucleoside 5'-diphosphate + ATP = a 2'-deoxyribonucleoside 5'-triphosphate + ADP. It carries out the reaction a ribonucleoside 5'-diphosphate + ATP = a ribonucleoside 5'-triphosphate + ADP. It catalyses the reaction ATP + protein L-histidine = ADP + protein N-phospho-L-histidine.. Major role in the synthesis of nucleoside triphosphates other than ATP. The ATP gamma phosphate is transferred to the NDP beta phosphate via a ping-pong mechanism, using a phosphorylated active-site intermediate. Negatively regulates Rho activity by interacting with AKAP13/LBC. Acts as a transcriptional activator of the MYC gene; binds DNA non-specifically. Binds to both single-stranded guanine- and cytosine-rich strands within the nuclease hypersensitive element (NHE) III(1) region of the MYC gene promoter. Does not bind to duplex NHE III(1). Has G-quadruplex (G4) DNA-binding activity, which is independent of its nucleotide-binding and kinase activity. Binds both folded and unfolded G4 with similar low nanomolar affinities. Stabilizes folded G4s regardless of whether they are prefolded or not. Exhibits histidine protein kinase activity. This Bos taurus (Bovine) protein is Nucleoside diphosphate kinase B (NME2).